The following is a 484-amino-acid chain: tRNA sulfurtransferase (484 aa).

The THUMP domain occupies Gly-62–Arg-166. Residues Leu-184–Ile-185, Lys-266, Gly-288, and Gln-297 each bind ATP. A disulfide bond links Cys-345 and Cys-456. The region spanning Pro-404–Pro-482 is the Rhodanese domain. The active-site Cysteine persulfide intermediate is Cys-456.

The protein belongs to the ThiI family.

It localises to the cytoplasm. It carries out the reaction [ThiI sulfur-carrier protein]-S-sulfanyl-L-cysteine + a uridine in tRNA + 2 reduced [2Fe-2S]-[ferredoxin] + ATP + H(+) = [ThiI sulfur-carrier protein]-L-cysteine + a 4-thiouridine in tRNA + 2 oxidized [2Fe-2S]-[ferredoxin] + AMP + diphosphate. It catalyses the reaction [ThiS sulfur-carrier protein]-C-terminal Gly-Gly-AMP + S-sulfanyl-L-cysteinyl-[cysteine desulfurase] + AH2 = [ThiS sulfur-carrier protein]-C-terminal-Gly-aminoethanethioate + L-cysteinyl-[cysteine desulfurase] + A + AMP + 2 H(+). Its pathway is cofactor biosynthesis; thiamine diphosphate biosynthesis. Catalyzes the ATP-dependent transfer of a sulfur to tRNA to produce 4-thiouridine in position 8 of tRNAs, which functions as a near-UV photosensor. Also catalyzes the transfer of sulfur to the sulfur carrier protein ThiS, forming ThiS-thiocarboxylate. This is a step in the synthesis of thiazole, in the thiamine biosynthesis pathway. The sulfur is donated as persulfide by IscS. In Marinobacter nauticus (strain ATCC 700491 / DSM 11845 / VT8) (Marinobacter aquaeolei), this protein is tRNA sulfurtransferase.